The sequence spans 450 residues: Glucose-6-phosphate isomerase (450 aa).

Catalysis depends on Glu-290, which acts as the Proton donor. Residues His-311 and Lys-425 contribute to the active site.

This sequence belongs to the GPI family.

The protein resides in the cytoplasm. It carries out the reaction alpha-D-glucose 6-phosphate = beta-D-fructose 6-phosphate. It functions in the pathway carbohydrate biosynthesis; gluconeogenesis. Its pathway is carbohydrate degradation; glycolysis; D-glyceraldehyde 3-phosphate and glycerone phosphate from D-glucose: step 2/4. In terms of biological role, catalyzes the reversible isomerization of glucose-6-phosphate to fructose-6-phosphate. This is Glucose-6-phosphate isomerase from Listeria monocytogenes serovar 1/2a (strain ATCC BAA-679 / EGD-e).